The sequence spans 194 residues: DPY30 domain-containing protein 2 (194 aa).

The disordered stretch occupies residues 126–172 (EAFEKEPLKQESLPGTSDMIPGMPQQSPSSEPSVSSQVDLNTGTPQE). Low complexity predominate over residues 149-163 (PQQSPSSEPSVSSQV).

It belongs to the dpy-30 family.

This chain is DPY30 domain-containing protein 2 (DYDC2), found in Bos taurus (Bovine).